We begin with the raw amino-acid sequence, 251 residues long: Uridylate kinase (251 aa).

Residue 19–22 (KLSG) coordinates ATP. Gly-61 contributes to the UMP binding site. Residues Gly-62 and Arg-66 each contribute to the ATP site. UMP contacts are provided by residues Asp-81 and 142-149 (TGNPYFTT). ATP contacts are provided by Thr-169, Tyr-175, and Asp-178.

Belongs to the UMP kinase family. In terms of assembly, homohexamer.

The protein resides in the cytoplasm. It catalyses the reaction UMP + ATP = UDP + ADP. Its pathway is pyrimidine metabolism; CTP biosynthesis via de novo pathway; UDP from UMP (UMPK route): step 1/1. Inhibited by UTP. In terms of biological role, catalyzes the reversible phosphorylation of UMP to UDP. The chain is Uridylate kinase from Anaeromyxobacter dehalogenans (strain 2CP-C).